A 315-amino-acid chain; its full sequence is 4-hydroxy-3-methylbut-2-enyl diphosphate reductase (315 aa).

Cys-12 serves as a coordination point for [4Fe-4S] cluster. Residues His-41 and His-74 each contribute to the (2E)-4-hydroxy-3-methylbut-2-enyl diphosphate site. Dimethylallyl diphosphate-binding residues include His-41 and His-74. Positions 41 and 74 each coordinate isopentenyl diphosphate. A [4Fe-4S] cluster-binding site is contributed by Cys-96. His-124 serves as a coordination point for (2E)-4-hydroxy-3-methylbut-2-enyl diphosphate. His-124 contacts dimethylallyl diphosphate. Isopentenyl diphosphate is bound at residue His-124. Residue Glu-126 is the Proton donor of the active site. Thr-168 serves as a coordination point for (2E)-4-hydroxy-3-methylbut-2-enyl diphosphate. Cys-198 is a binding site for [4Fe-4S] cluster. Positions 226, 227, 228, and 270 each coordinate (2E)-4-hydroxy-3-methylbut-2-enyl diphosphate. The dimethylallyl diphosphate site is built by Ser-226, Ser-227, Asn-228, and Ser-270. 4 residues coordinate isopentenyl diphosphate: Ser-226, Ser-227, Asn-228, and Ser-270.

Belongs to the IspH family. [4Fe-4S] cluster is required as a cofactor.

The enzyme catalyses isopentenyl diphosphate + 2 oxidized [2Fe-2S]-[ferredoxin] + H2O = (2E)-4-hydroxy-3-methylbut-2-enyl diphosphate + 2 reduced [2Fe-2S]-[ferredoxin] + 2 H(+). It catalyses the reaction dimethylallyl diphosphate + 2 oxidized [2Fe-2S]-[ferredoxin] + H2O = (2E)-4-hydroxy-3-methylbut-2-enyl diphosphate + 2 reduced [2Fe-2S]-[ferredoxin] + 2 H(+). It functions in the pathway isoprenoid biosynthesis; dimethylallyl diphosphate biosynthesis; dimethylallyl diphosphate from (2E)-4-hydroxy-3-methylbutenyl diphosphate: step 1/1. Its pathway is isoprenoid biosynthesis; isopentenyl diphosphate biosynthesis via DXP pathway; isopentenyl diphosphate from 1-deoxy-D-xylulose 5-phosphate: step 6/6. Functionally, catalyzes the conversion of 1-hydroxy-2-methyl-2-(E)-butenyl 4-diphosphate (HMBPP) into a mixture of isopentenyl diphosphate (IPP) and dimethylallyl diphosphate (DMAPP). Acts in the terminal step of the DOXP/MEP pathway for isoprenoid precursor biosynthesis. The chain is 4-hydroxy-3-methylbut-2-enyl diphosphate reductase from Pseudomonas putida (strain ATCC 700007 / DSM 6899 / JCM 31910 / BCRC 17059 / LMG 24140 / F1).